Consider the following 570-residue polypeptide: Ribosome-inactivating protein SNAIf (570 aa).

An N-terminal signal peptide occupies residues 1–28 (MRVVTKLLYLVVLAICGLGIHGALTHTR). Asparagine 40, asparagine 62, and asparagine 140 each carry an N-linked (GlcNAc...) asparagine glycan. The active site involves glutamate 199. Asparagine 232 carries an N-linked (GlcNAc...) asparagine glycan. Cystine bridges form between cysteine 284–cysteine 316, cysteine 332–cysteine 351, and cysteine 373–cysteine 385. Ricin B-type lectin domains follow at residues 319–439 (VEVT…WTVG) and 441–566 (VEPL…WITT). The stretch at 329-369 (DGLCVDVRDGHYIDGNTVQLGPCGNECNQLWTFRTDGTIRW) is one 1-alpha repeat. The 1-beta repeat unit spans residues 370-405 (LGKCLTTSSSVMIYDCNTVPPEATKWVVSTDGTITN). One copy of the 1-gamma repeat lies at 408-440 (SGLVLTAPQAAEGTALSLENNIHAARQGWTVGD). One copy of the 2-alpha repeat lies at 452–489 (KQMCLTENGENNFVWLEDCVLNRVEQEWALYGDGTIRV). Cysteine 455 and cysteine 470 form a disulfide bridge. Asparagine 492 carries N-linked (GlcNAc...) asparagine glycosylation. Residues 493 to 531 (RSLCVTSEDHEPSDLIVILKCEGSGNQRWVFNTNGTISN) form a 2-beta repeat. Cysteines 496 and 513 form a disulfide. N-linked (GlcNAc...) asparagine glycans are attached at residues asparagine 526 and asparagine 544. The stretch at 534–567 (AKLVMDVAQSNVSLRKIILYPPTGNPNQQWITTT) is one 2-gamma repeat.

Belongs to the ribosome-inactivating protein family. Type 2 RIP subfamily. In terms of assembly, tetramer of four pairs of disulfide bound A-B chains. Post-translationally, the precursor is processed in two chains, A and B, that are linked by a disulfide bond. A small truncated form corresponding roughly to the second ricin B-type lectin domain of the B chain, TrSNAIf, can also be produced. N-glycosylated. In terms of tissue distribution, expressed in fruits.

The catalysed reaction is Endohydrolysis of the N-glycosidic bond at one specific adenosine on the 28S rRNA.. Functionally, neu5Ac(alpha2-6)Gal/GalNAc specific agglutinin. Behaves as a type-2 ribosome-inactivating protein. Strongly inhibits mammalian but not plant ribosomes. The A chain is responsible for inhibiting protein synthesis through the catalytic inactivation of 60S ribosomal subunits by removing adenine from position 4,324 of 28S rRNA. The B chain binds to cell receptors and probably facilitates the entry into the cell of the A chain; B chains are also responsible for cell agglutination (lectin activity). Involved in plant defense against insects. In terms of biological role, binds Neu5Ac(alpha2-6)Gal/GalNAc but has no clear agglutination activity. This is Ribosome-inactivating protein SNAIf from Sambucus nigra (European elder).